Consider the following 133-residue polypeptide: Ribosome-binding factor A (133 aa).

Belongs to the RbfA family. Monomer. Binds 30S ribosomal subunits, but not 50S ribosomal subunits or 70S ribosomes.

It is found in the cytoplasm. Its function is as follows. One of several proteins that assist in the late maturation steps of the functional core of the 30S ribosomal subunit. Associates with free 30S ribosomal subunits (but not with 30S subunits that are part of 70S ribosomes or polysomes). Required for efficient processing of 16S rRNA. May interact with the 5'-terminal helix region of 16S rRNA. In Trichormus variabilis (strain ATCC 29413 / PCC 7937) (Anabaena variabilis), this protein is Ribosome-binding factor A.